Reading from the N-terminus, the 337-residue chain is Sorting nexin-15 (337 aa).

Positions 1–130 (MSRQAKDDFL…EFFRGGEVTR (130 aa)) constitute a PX domain. A 1,2-diacyl-sn-glycero-3-phospho-(1D-myo-inositol-3-phosphate) is bound by residues R51, S53, R87, and R96. R105 carries the omega-N-methylarginine modification. The disordered stretch occupies residues 133–156 (EVSRDLRILPPPLIPTPPPDEARL). Residues 141–151 (LPPPLIPTPPP) show a composition bias toward pro residues. Phosphoserine occurs at positions 201 and 227. The disordered stretch occupies residues 244 to 270 (LDQEPWEPGGQEEEEAEDGEPAPAYLG). The segment covering 253–263 (GQEEEEAEDGE) has biased composition (acidic residues). Residues 265–337 (APAYLGQATE…RAEMLHTHLP (73 aa)) enclose the MIT domain.

It belongs to the sorting nexin family. In terms of assembly, homodimer. Interacts with SNX1, SNX2 and SNX4.

The protein localises to the cytoplasm. The protein resides in the membrane. It is found in the cytoplasmic vesicle membrane. Its function is as follows. May be involved in several stages of intracellular trafficking. Overexpression of SNX15 disrupts the normal trafficking of proteins from the plasma membrane to recycling endosomes or the TGN. The sequence is that of Sorting nexin-15 (Snx15) from Mus musculus (Mouse).